Consider the following 2200-residue polypeptide: Non-reducing polyketide synthase tpeB (2200 aa).

Positions 16-255 constitute a Starter acyltransferase (SAT) domain; the sequence is FFGDQTVDTL…MDLPLGTPAH (240 aa). Residues 382-815 form the Ketosynthase family 3 (KS3) domain; the sequence is SNMIAIVGQS…GGNNCVLLEE (434 aa). Catalysis depends on for beta-ketoacyl synthase activity residues cysteine 554, histidine 690, and histidine 729. The Malonyl-CoA:ACP transacylase (MAT) domain maps to 914-1202; that stretch reads VFAFTGQGSQ…VLNSFIKATL (289 aa). Residues 1296 to 1621 are product template (PT) domain; the sequence is TASLQRVREE…TKRILTTILG (326 aa). An N-terminal hotdog fold region spans residues 1300-1433; sequence QRVREERIQG…CKIRFESKAD (134 aa). In terms of domain architecture, PKS/mFAS DH spans 1300-1617; that stretch reads QRVREERIQG…FQRLTKRILT (318 aa). Histidine 1332 serves as the catalytic Proton acceptor; for dehydratase activity. Positions 1462–1617 are C-terminal hotdog fold; the sequence is NGHKLPKPVV…FQRLTKRILT (156 aa). The Proton donor; for dehydratase activity role is filled by aspartate 1522. Positions 1625–1652 are disordered; it reads DHHNSNEVRNGNATTTHTNPPAHATTQS. Residues 1636–1650 show a composition bias toward low complexity; the sequence is NATTTHTNPPAHATT. Carrier domains are found at residues 1671–1748 and 1791–1865; these read TVGE…AELP and ANYA…GPNT. O-(pantetheine 4'-phosphoryl)serine occurs at positions 1708 and 1825. A thioesterase (TE) domain region spans residues 1931–2173; it reads MFFLPDGTGY…TVPCDHLSIM (243 aa).

Pantetheine 4'-phosphate is required as a cofactor.

It participates in secondary metabolite biosynthesis. In terms of biological role, non-reducing polyketide synthase; part of the gene cluster that mediates the biosynthesis of polyesters containing 2,4-dihydroxy-6-(2-hydroxypropyl)benzoate and 3-hydroxybutyrate moieties, such as talapolyester G, 15G256beta and 15G256beta-2; as well as to oxidized derivatives such as 15G256alpha. The biosynthesis of the polyesters probably starts with the formation of the diketide 3-hydroxybutyryl-S-ACP catalyzed by the partially reducing polyketide synthase tpeA. The acceptance of 3-hydroxybutyryl by the non-reducing polyketide synthase tpeB would initiate further elongation and cyclization, catalyzed by KS and PT, respectively, to form 2,4-dihydroxy-6-(2-hydroxyn-propyl)benzoyl-S-ACP intermediate. The TE domain could catalyze lactonization at this step to yield 6-hydroxymellein as a derailment product. The polyesterification process maybe occurs when additional molecules of 3-hydroxybutyryl are transferred to tpeB. Following the first esterification step, an intramolecular cyclization catalyzed by the TE domain of tpeB would give talarodioxadione 1, whereas the ethyl esterification of talapolyester G perhaps happens spontaneously. Further oxidation by the cytochrome P450 monooxygenase tpeC then leads to the formation of oxidized derivatives. This Talaromyces stipitatus (strain ATCC 10500 / CBS 375.48 / QM 6759 / NRRL 1006) (Penicillium stipitatum) protein is Non-reducing polyketide synthase tpeB.